The following is a 127-amino-acid chain: Large ribosomal subunit protein uL22c (127 aa).

The protein belongs to the universal ribosomal protein uL22 family. As to quaternary structure, part of the 50S ribosomal subunit.

It localises to the plastid. It is found in the chloroplast. In terms of biological role, this protein binds specifically to 23S rRNA. The globular domain of the protein is located near the polypeptide exit tunnel on the outside of the subunit, while an extended beta-hairpin is found that lines the wall of the exit tunnel in the center of the 70S ribosome. The polypeptide is Large ribosomal subunit protein uL22c (rpl22) (Acorus calamus var. americanus (American sweet flag)).